The following is a 300-amino-acid chain: Endonuclease III-like protein 1 (300 aa).

The transit peptide at 1–19 directs the protein to the mitochondrion; that stretch reads MNSGVRMVTRSRSRATRIA. The tract at residues 1 to 53 is disordered; the sequence is MNSGVRMVTRSRSRATRIASEGCREELAPREAAAEGRKSHRPVRHPRRTQKTH. Positions 22–37 are enriched in basic and acidic residues; that stretch reads GCREELAPREAAAEGR. Basic residues predominate over residues 38-51; the sequence is KSHRPVRHPRRTQK. One can recognise a HhH domain in the interval 187 to 211; sequence RYEGDIPASVAELVALPGVGPKMAH. The Nucleophile; for N-glycosylase activity role is filled by K208. The [4Fe-4S] cluster site is built by C278, C285, C288, and C294.

Belongs to the Nth/MutY family. In terms of assembly, interacts with YBX1. Interacts with ERCC5/XPG; the interaction stimulates NTHL1 activity and NTHL1 binding to its DNA substrate. It depends on [4Fe-4S] cluster as a cofactor. Ubiquitinated by TRIM26; leading to proteasomal degradation. As to expression, widely expressed.

The protein localises to the nucleus. Its subcellular location is the mitochondrion. The enzyme catalyses 2'-deoxyribonucleotide-(2'-deoxyribose 5'-phosphate)-2'-deoxyribonucleotide-DNA = a 3'-end 2'-deoxyribonucleotide-(2,3-dehydro-2,3-deoxyribose 5'-phosphate)-DNA + a 5'-end 5'-phospho-2'-deoxyribonucleoside-DNA + H(+). In terms of biological role, bifunctional DNA N-glycosylase with associated apurinic/apyrimidinic (AP) lyase function that catalyzes the first step in base excision repair (BER), the primary repair pathway for the repair of oxidative DNA damage. The DNA N-glycosylase activity releases the damaged DNA base from DNA by cleaving the N-glycosidic bond, leaving an AP site. The AP lyase activity cleaves the phosphodiester bond 3' to the AP site by a beta-elimination. Primarily recognizes and repairs oxidative base damage of pyrimidines. The sequence is that of Endonuclease III-like protein 1 (Nthl1) from Mus musculus (Mouse).